We begin with the raw amino-acid sequence, 194 residues long: Lachesicidin (194 aa).

Residues 1-22 form the signal peptide; it reads MQGFFWKTWLVLAVCGTPASLA. The propeptide occupies 23 to 160; the sequence is HRPLSYGEAL…DEEKDQPKRV (138 aa). Cystine bridges form between Cys-79–Cys-90 and Cys-101–Cys-118. The span at 125–154 shows a compositional bias: acidic residues; the sequence is EEEEEEEEEEQKAEAENDEEVEKEKEDEEK. Positions 125-157 are disordered; it reads EEEEEEEEEEQKAEAENDEEVEKEKEDEEKDQP.

It belongs to the cathelicidin family. Expressed by the venom gland.

The protein localises to the secreted. The protein resides in the target cell membrane. Potent antimicrobial peptide against Gram-negative and Gram-positive bacteria. Adopts an amphipathic alpha helical conformation, that may allow to partition into the target membrane. Low hemolytic activities have been observed on mammalian cells. This Lachesis muta rhombeata (Bushmaster) protein is Lachesicidin.